The chain runs to 100 residues: C-X-C motif chemokine 11 (100 aa).

The first 21 residues, 1-21 (MNRKVTAIALAAIIWATAAQG), serve as a signal peptide directing secretion. 2 disulfides stabilise this stretch: C30/C57 and C32/C74.

It belongs to the intercrine alpha (chemokine CxC) family. Interacts with TNFAIP6 (via Link domain).

The protein resides in the secreted. In terms of biological role, chemotactic for interleukin-activated T-cells but not unstimulated T-cells, neutrophils or monocytes. Induces calcium release in activated T-cells. Binds to CXCR3. May play an important role in CNS diseases which involve T-cell recruitment. May play a role in skin immune responses. This Mus musculus (Mouse) protein is C-X-C motif chemokine 11 (Cxcl11).